We begin with the raw amino-acid sequence, 300 residues long: GTPase Era (300 aa).

The Era-type G domain occupies 6 to 173 (KSGFLSIIGR…VDVLKEHLPE (168 aa)). Positions 14-21 (GRPNVGKS) are G1. Position 14-21 (14-21 (GRPNVGKS)) interacts with GTP. The tract at residues 40–44 (QTTRN) is G2. Residues 61 to 64 (DTPG) are G3. GTP is bound by residues 61–65 (DTPGI) and 123–126 (NKID). The G4 stretch occupies residues 123–126 (NKID). The segment at 152–154 (ISA) is G5. The KH type-2 domain maps to 204–281 (TKEEVPHSIA…YLELWIKVKK (78 aa)).

This sequence belongs to the TRAFAC class TrmE-Era-EngA-EngB-Septin-like GTPase superfamily. Era GTPase family. Monomer.

Its subcellular location is the cytoplasm. It localises to the cell membrane. In terms of biological role, an essential GTPase that binds both GDP and GTP, with rapid nucleotide exchange. Plays a role in 16S rRNA processing and 30S ribosomal subunit biogenesis and possibly also in cell cycle regulation and energy metabolism. In Oceanobacillus iheyensis (strain DSM 14371 / CIP 107618 / JCM 11309 / KCTC 3954 / HTE831), this protein is GTPase Era.